Here is a 580-residue protein sequence, read N- to C-terminus: 2-hydroxyacyl-CoA lyase 1 (580 aa).

Position 47 (Glu47) interacts with thiamine diphosphate. The segment at 413-494 (TMDIGRLCIP…FIVLNNNGVY (82 aa)) is thiamine pyrophosphate binding. 2 residues coordinate Mg(2+): Asp463 and Asn490.

The protein belongs to the TPP enzyme family. As to quaternary structure, homotetramer. The cofactor is Mg(2+). Thiamine diphosphate serves as cofactor.

The protein resides in the peroxisome. The catalysed reaction is a 2-hydroxy-3-methyl fatty acyl-CoA = a 2-methyl-branched fatty aldehyde + formyl-CoA. It catalyses the reaction an (R)-2-hydroxy-long-chain-fatty acyl-CoA = a long-chain fatty aldehyde + formyl-CoA. It carries out the reaction 2-hydroxy-3-methylhexadecanoyl-CoA = 2-methylpentadecanal + formyl-CoA. The enzyme catalyses 2-hydroxyoctadecanoyl-CoA = heptadecanal + formyl-CoA. Its function is as follows. Peroxisomal 2-OH acyl-CoA lyase involved in the cleavage (C1 removal) reaction in the fatty acid alpha-oxydation in a thiamine pyrophosphate (TPP)-dependent manner. Involved in the degradation of 3-methyl-branched fatty acids and the shortening of 2-hydroxy long-chain fatty acids. The protein is 2-hydroxyacyl-CoA lyase 1 (hacl1) of Dictyostelium discoideum (Social amoeba).